A 454-amino-acid polypeptide reads, in one-letter code: Ribosomal protein uS12 methylthiotransferase RimO (454 aa).

In terms of domain architecture, MTTase N-terminal spans 14–125; it reads SKVAFSHVGC…IAKVLDRVEK (112 aa). The [4Fe-4S] cluster site is built by cysteine 23, cysteine 59, cysteine 88, cysteine 163, cysteine 167, and cysteine 170. The 230-residue stretch at 149–378 folds into the Radical SAM core domain; that stretch reads DKNKFVAYLR…ISVQQNISKD (230 aa). Residues 381-452 form the TRAM domain; sequence QSYVGSKMKI…EYDLYGETIK (72 aa).

This sequence belongs to the methylthiotransferase family. RimO subfamily. [4Fe-4S] cluster is required as a cofactor.

The protein localises to the cytoplasm. The catalysed reaction is L-aspartate(89)-[ribosomal protein uS12]-hydrogen + (sulfur carrier)-SH + AH2 + 2 S-adenosyl-L-methionine = 3-methylsulfanyl-L-aspartate(89)-[ribosomal protein uS12]-hydrogen + (sulfur carrier)-H + 5'-deoxyadenosine + L-methionine + A + S-adenosyl-L-homocysteine + 2 H(+). Its function is as follows. Catalyzes the methylthiolation of an aspartic acid residue of ribosomal protein uS12. This is Ribosomal protein uS12 methylthiotransferase RimO from Prochlorococcus marinus (strain MIT 9312).